The following is a 366-amino-acid chain: NADP-dependent isopropanol dehydrogenase (366 aa).

Cys43, His65, Glu66, and Asp156 together coordinate Zn(2+). NADP(+)-binding positions include 181–184, 204–206, Tyr224, 271–273, and Lys346; these read IGPV, GSR, and VNY.

Belongs to the zinc-containing alcohol dehydrogenase family. As to quaternary structure, homodimer. Zn(2+) is required as a cofactor.

The protein resides in the cytoplasm. The enzyme catalyses propan-2-ol + NADP(+) = acetone + NADPH + H(+). Functionally, alcohol dehydrogenase with a preference for medium chain secondary alcohols, such as 2-butanol and isopropanol. Has very low activity with primary alcohols, such as ethanol. Under physiological conditions, the enzyme reduces aldehydes and 2-ketones to produce secondary alcohols. Is also active with acetaldehyde and propionaldehyde. The chain is NADP-dependent isopropanol dehydrogenase from Entamoeba histolytica (strain ATCC 30459 / HM-1:IMSS / ABRM).